Reading from the N-terminus, the 132-residue chain is Pro-MCH 2 (132 aa).

Residues methionine 1–alanine 24 form the signal peptide. Cysteines 120 and 129 form a disulfide.

Belongs to the melanin-concentrating hormone family. In terms of tissue distribution, pituitary gland. Produced in neurons of lateral basal hypothalamus which project both to the brain and to the neural lobe of the pituitary gland from where MCH is released.

Plays a role in skin pigmentation by antagonizing the action of melanotropin alpha. Induces melanin concentration within the melanophores. May participate in the control of the hypothalamo-pituitary adrenal gland axis by inhibiting the release of ACTH. The protein is Pro-MCH 2 (mch2) of Oncorhynchus keta (Chum salmon).